The sequence spans 1227 residues: Methionine synthase (1227 aa).

The Hcy-binding domain occupies 2 to 325; it reads SSKVEQLRAQ…QHIAAMSRAV (324 aa). The Zn(2+) site is built by Cys247, Cys310, and Cys311. In terms of domain architecture, Pterin-binding spans 356–617; that stretch reads FVNVGERTNV…LPAELRDAVE (262 aa). Residues 650–744 form the B12-binding N-terminal domain; that stretch reads QQAEWRSWEV…FIEASKEQGK (95 aa). Methylcob(III)alamin contacts are provided by residues Glu694, 756–760, His759, Ser804, Thr808, and Ala860; that span reads GDVHD. Positions 746–881 constitute a B12-binding domain; it reads NGKMVIATVK…SDTQRDDFVA (136 aa). Residues 897–1227 enclose the AdoMet activation domain; sequence KKPRTPPVTL…LAPNLGYDAD (331 aa). S-adenosyl-L-methionine is bound by residues Asp946, Arg1134, and 1189 to 1190; that span reads YY.

It belongs to the vitamin-B12 dependent methionine synthase family. Methylcob(III)alamin is required as a cofactor. The cofactor is Zn(2+).

It carries out the reaction (6S)-5-methyl-5,6,7,8-tetrahydrofolate + L-homocysteine = (6S)-5,6,7,8-tetrahydrofolate + L-methionine. It functions in the pathway amino-acid biosynthesis; L-methionine biosynthesis via de novo pathway; L-methionine from L-homocysteine (MetH route): step 1/1. Functionally, catalyzes the transfer of a methyl group from methyl-cobalamin to homocysteine, yielding enzyme-bound cob(I)alamin and methionine. Subsequently, remethylates the cofactor using methyltetrahydrofolate. This Escherichia coli (strain K12) protein is Methionine synthase (metH).